A 197-amino-acid chain; its full sequence is Probable thymidylate kinase (197 aa).

7-14 (GLDGSGKT) contributes to the ATP binding site.

The protein belongs to the thymidylate kinase family.

It carries out the reaction dTMP + ATP = dTDP + ADP. The sequence is that of Probable thymidylate kinase from Halorubrum lacusprofundi (strain ATCC 49239 / DSM 5036 / JCM 8891 / ACAM 34).